The chain runs to 240 residues: Sugar fermentation stimulation protein homolog (240 aa).

The protein belongs to the SfsA family.

The protein is Sugar fermentation stimulation protein homolog of Methanothermobacter thermautotrophicus (strain ATCC 29096 / DSM 1053 / JCM 10044 / NBRC 100330 / Delta H) (Methanobacterium thermoautotrophicum).